The chain runs to 680 residues: DNA-directed RNA polymerase subunit beta' (680 aa).

Residues C69, C71, C87, and C90 each coordinate Zn(2+). Mg(2+)-binding residues include D489, D491, and D493.

Belongs to the RNA polymerase beta' chain family. RpoC1 subfamily. As to quaternary structure, in plastids the minimal PEP RNA polymerase catalytic core is composed of four subunits: alpha, beta, beta', and beta''. When a (nuclear-encoded) sigma factor is associated with the core the holoenzyme is formed, which can initiate transcription. Requires Mg(2+) as cofactor. Zn(2+) is required as a cofactor.

It is found in the plastid. Its subcellular location is the chloroplast. It catalyses the reaction RNA(n) + a ribonucleoside 5'-triphosphate = RNA(n+1) + diphosphate. DNA-dependent RNA polymerase catalyzes the transcription of DNA into RNA using the four ribonucleoside triphosphates as substrates. This is DNA-directed RNA polymerase subunit beta' from Barbarea verna (Land cress).